Consider the following 457-residue polypeptide: Oxysterol-binding protein-related protein 3C (457 aa).

Disordered stretches follow at residues Asn-37–Trp-61 and Gln-363–Lys-393. Basic and acidic residues-rich tracts occupy residues Gly-47 to Trp-61 and Gly-370 to Gly-391.

This sequence belongs to the OSBP family. As to expression, expressed in roots, leaves, stems and flowers.

Functionally, may be involved in the transport of sterols. The chain is Oxysterol-binding protein-related protein 3C (ORP3C) from Arabidopsis thaliana (Mouse-ear cress).